The sequence spans 602 residues: Serine/threonine-protein phosphatase 2A 56 kDa regulatory subunit delta isoform (602 aa).

Residues 1 to 13 (MPYKLKKEKEPPK) show a composition bias toward basic and acidic residues. The segment at 1 to 96 (MPYKLKKEKE…QSSSRFNLSK (96 aa)) is disordered. 5 consecutive repeat copies span residues 37–38 (QP), 39–40 (QP), 41–42 (QP), 43–44 (QP), and 45–46 (QP). The segment at 37–52 (QPQPQPQPQPQAQSQP) is 8 X 2 AA approximate tandem repeats of Q-P. Positions 46 to 55 (PQAQSQPPSS) are enriched in low complexity. One copy of the 6; approximate repeat lies at 47 to 48 (QA). One copy of the 7; approximate repeat lies at 49–50 (QS). Repeat unit 8 spans residues 51-52 (QP). T63 is modified (phosphothreonine). S88, S89, and S90 each carry phosphoserine. Residues 523–530 (RAPPPLPP) carry the SH3-binding; class I motif. Residues 548 to 565 (KRTVETEAVQMLKDIKKE) carry the Nuclear localization signal motif. Phosphoserine occurs at positions 573 and 598.

It belongs to the phosphatase 2A regulatory subunit B56 family. PP2A consists of a common heterodimeric core enzyme, composed of a 36 kDa catalytic subunit (subunit C) and a 65 kDa constant regulatory subunit (PR65 or subunit A), that associates with a variety of regulatory subunits. Proteins that associate with the core dimer include three families of regulatory subunits B (the R2/B/PR55/B55, R3/B''/PR72/PR130/PR59 and R5/B'/B56 families), the 48 kDa variable regulatory subunit, viral proteins, and cell signaling molecules. Interacts with the PP2A A subunit PPP2R1A. Interacts with SGO1. Interacts with ADCY8. Isoform Delta-2 is widely expressed. Isoform Delta-1 is highly expressed in brain.

It localises to the cytoplasm. Its subcellular location is the nucleus. In terms of biological role, the B regulatory subunit might modulate substrate selectivity and catalytic activity, and might also direct the localization of the catalytic enzyme to a particular subcellular compartment. This is Serine/threonine-protein phosphatase 2A 56 kDa regulatory subunit delta isoform (PPP2R5D) from Homo sapiens (Human).